A 911-amino-acid polypeptide reads, in one-letter code: Protein SOSEKI (911 aa).

The segment at 15-107 (TKVQVVYYLS…LVLKGSELYT (93 aa)) is DIX-like oligomerization domain. 2 disordered regions span residues 219–470 (SETL…TQCE) and 492–810 (LCGN…PPRI). 2 stretches are compositionally biased toward basic and acidic residues: residues 253–286 (TDRE…EVSR) and 295–407 (EAPR…EELP). A compositionally biased stretch (polar residues) spans 414-423 (SPTCSESGDS). Residues 452–467 (SSSTRSSTPSTSAAST) show a composition bias toward low complexity. Residues 493 to 494 (CG) carry the Association to cell membranes motif. The segment covering 511-527 (PLAAAAQPASGAVPQSP) has biased composition (low complexity). Residues 591-607 (SGVNSAMATPFLQTENN) are compositionally biased toward polar residues. A compositionally biased stretch (low complexity) spans 608-662 (SPSSSESSSAAVSSGKKPASISLSGTSDASDGGNGASSTASSSSEVQNNVSVKEV). Residues 663–683 (ITQQLPSPSSSEGRPSLNIDT) are compositionally biased toward polar residues. Basic and acidic residues predominate over residues 696–709 (SDVRETVKTTRPDS). Residues 722–733 (PVRTQLSSSPSF) show a composition bias toward polar residues. Residues 735 to 771 (KRIEDARARARSLVSKEIRSGESRSSKDLLKENDRVK) show a composition bias toward basic and acidic residues. Over residues 772 to 784 (TSSGSMRSGSTRT) the composition is skewed to low complexity. Polar residues predominate over residues 785–805 (PNNKNGTTGAGSKTLSGTFNR). Residues 864–893 (ILQECGQCGRTFKPDSLKVHMRGCHALRRS) form a C2HC/C3H-type zinc finger. Positions 868, 871, 883, and 887 each coordinate Zn(2+).

The protein belongs to the SOSEKI family. As to quaternary structure, homodimer. Forms long polymer filaments with other SOKs proteins polymers crucial for polar localization and biological activity. It depends on Zn(2+) as a cofactor.

It is found in the cell membrane. In terms of biological role, SOSEKI proteins locally interpret global polarity cues and can influence cell division orientation to coordinate cell polarization relative to body axes. The polypeptide is Protein SOSEKI (Marchantia polymorpha (Common liverwort)).